The primary structure comprises 22 residues: Mu-conotoxin SxIIIC (22 aa).

Disulfide bonds link Cys-3-Cys-15, Cys-4-Cys-21, and Cys-10-Cys-22. Cys-22 carries the cysteine amide modification.

The protein belongs to the conotoxin M superfamily. In terms of tissue distribution, expressed by the venom duct.

The protein resides in the secreted. Its function is as follows. Mu-conotoxins block voltage-gated sodium channels (Nav). This toxin potently inhibits hNav1.4/SCN4A (IC(50)=15.11 nM). It also displays lower activities on other human subtypes (Nav1.1/SCN1A; IC(50)=132 nM, Nav1.2/SCN2A; IC(50)=363.8, Nav1.3/SCN3A; IC(50)=89.4, Nav1.6/SCN3A; IC(50)=124.9, Nav1.7/SCN7A; IC(50)=152.2). At Nav1.7/SCN9A, it does not elicit change in channel voltage-dependence of fast inactivation or activation, suggesting it acts as a pore blocker. Interestingly, it blocks current inhibition in an irreversible manner (tested during 35 minutes). The protein is Mu-conotoxin SxIIIC of Conus striolatus (Cone snail).